A 91-amino-acid polypeptide reads, in one-letter code: Acyl-CoA-binding domain-containing protein 2 (91 aa).

The region spanning 3–88 (LQEEFEEFAE…VKQLLEEASA (86 aa)) is the ACB domain. Residues lysine 15, 30–34 (YGLYK), lysine 52, lysine 56, and tyrosine 75 each bind an acyl-CoA.

It belongs to the ACBP family. In terms of tissue distribution, highly expressed in leaves. Expressed at low levels in roots and seeds.

Its subcellular location is the cytoplasm. The protein resides in the cytosol. In terms of biological role, binds medium- and long-chain acyl-CoA esters with high affinity. Can interact in vitro with linolenoyl-CoA. Binds palmitoyl-CoA and linoleoyl-CoA in vitro. Binds phosphatidic acid (PA) and phosphatidylcholine (PC) in vitro. May play a role in the biosynthesis of phospholipids. The protein is Acyl-CoA-binding domain-containing protein 2 of Oryza sativa subsp. japonica (Rice).